The sequence spans 478 residues: Light-independent protochlorophyllide reductase subunit N (478 aa).

[4Fe-4S] cluster-binding residues include cysteine 22, cysteine 47, and cysteine 107.

It belongs to the BchN/ChlN family. As to quaternary structure, protochlorophyllide reductase is composed of three subunits; ChlL, ChlN and ChlB. Forms a heterotetramer of two ChlB and two ChlN subunits. Requires [4Fe-4S] cluster as cofactor.

It localises to the plastid. It is found in the chloroplast. It catalyses the reaction chlorophyllide a + oxidized 2[4Fe-4S]-[ferredoxin] + 2 ADP + 2 phosphate = protochlorophyllide a + reduced 2[4Fe-4S]-[ferredoxin] + 2 ATP + 2 H2O. The protein operates within porphyrin-containing compound metabolism; chlorophyll biosynthesis (light-independent). Its function is as follows. Component of the dark-operative protochlorophyllide reductase (DPOR) that uses Mg-ATP and reduced ferredoxin to reduce ring D of protochlorophyllide (Pchlide) to form chlorophyllide a (Chlide). This reaction is light-independent. The NB-protein (ChlN-ChlB) is the catalytic component of the complex. The protein is Light-independent protochlorophyllide reductase subunit N of Chlorokybus atmophyticus (Soil alga).